The primary structure comprises 448 residues: Trigger factor (448 aa).

The region spanning 163 to 248 is the PPIase FKBP-type domain; sequence GDIVVIDFDG…VKDIRVPKAA (86 aa).

Belongs to the FKBP-type PPIase family. Tig subfamily.

The protein localises to the cytoplasm. The enzyme catalyses [protein]-peptidylproline (omega=180) = [protein]-peptidylproline (omega=0). Involved in protein export. Acts as a chaperone by maintaining the newly synthesized protein in an open conformation. Functions as a peptidyl-prolyl cis-trans isomerase. This is Trigger factor from Rhodospirillum centenum (strain ATCC 51521 / SW).